Here is a 456-residue protein sequence, read N- to C-terminus: Vitamin K-dependent protein C (456 aa).

The signal sequence occupies residues 1-20; that stretch reads MWQLASLSLLLTICGTCSTA. The propeptide occupies 21-42; that stretch reads APPGSVFSSSESAHQVLRIRKR. Residues 47–88 form the Gla domain; it reads LEEIRAGSLERECMEEICDFEEAKEIFQNVDDTLAYWSKYVD. 4-carboxyglutamate is present on residues Glu-48, Glu-49, Glu-56, Glu-58, Glu-61, Glu-62, Glu-67, Glu-68, and Glu-71. Cys-59 and Cys-64 are disulfide-bonded. Cystine bridges form between Cys-92–Cys-111, Cys-101–Cys-106, Cys-105–Cys-120, and Cys-122–Cys-131. EGF-like domains lie at 97–132 and 136–176; these read PEHA…RFCQ and SYIN…LQCQ. Asp-113 carries the (3R)-3-hydroxyaspartate modification. A glycan (N-linked (GlcNAc...) asparagine) is linked at Asn-139. 5 cysteine pairs are disulfide-bonded: Cys-140–Cys-151, Cys-147–Cys-160, Cys-162–Cys-175, Cys-183–Cys-318, and Cys-237–Cys-253. N-linked (GlcNAc...) asparagine glycosylation is present at Asn-202. The Peptidase S1 domain maps to 211–445; the sequence is LVNGKVTRRG…YLDWIHSHIR (235 aa). The active-site Charge relay system is the His-252. A glycan (N-linked (GlcNAc...) asparagine) is linked at Asn-289. Asp-298 acts as the Charge relay system in catalysis. Asn-350 carries N-linked (GlcNAc...) asparagine glycosylation. 2 disulfides stabilise this stretch: Cys-368–Cys-382 and Cys-393–Cys-421. The Charge relay system role is filled by Ser-397.

It belongs to the peptidase S1 family. Synthesized as a single chain precursor, which is cleaved into a light chain and a heavy chain held together by a disulfide bond. The enzyme is then activated by thrombin, which cleaves a tetradecapeptide from the amino end of the heavy chain; this reaction, which occurs at the surface of endothelial cells, is strongly promoted by thrombomodulin. The vitamin K-dependent, enzymatic carboxylation of some Glu residues allows the modified protein to bind calcium. In terms of processing, the iron and 2-oxoglutarate dependent 3-hydroxylation of aspartate and asparagine is (R) stereospecific within EGF domains. As to expression, plasma; synthesized in the liver.

It localises to the secreted. Its subcellular location is the golgi apparatus. The protein resides in the endoplasmic reticulum. The catalysed reaction is Degradation of blood coagulation factors Va and VIIIa.. In terms of biological role, protein C is a vitamin K-dependent serine protease that regulates blood coagulation by inactivating factors Va and VIIIa in the presence of calcium ions and phospholipids. Exerts a protective effect on the endothelial cell barrier function. This Canis lupus familiaris (Dog) protein is Vitamin K-dependent protein C (PROC).